A 387-amino-acid chain; its full sequence is Phosphoglycerate kinase (387 aa).

Substrate contacts are provided by residues 21 to 23 (DLN), arginine 36, and 59 to 62 (HLGR). An N6-acetyllysine modification is found at lysine 84. Positions 113 and 146 each coordinate substrate. ATP contacts are provided by residues lysine 197, glutamate 314, and 340–343 (GGDT).

This sequence belongs to the phosphoglycerate kinase family. Monomer.

The protein localises to the cytoplasm. The catalysed reaction is (2R)-3-phosphoglycerate + ATP = (2R)-3-phospho-glyceroyl phosphate + ADP. Its pathway is carbohydrate degradation; glycolysis; pyruvate from D-glyceraldehyde 3-phosphate: step 2/5. The polypeptide is Phosphoglycerate kinase (Escherichia coli O9:H4 (strain HS)).